Here is an 855-residue protein sequence, read N- to C-terminus: DNA mismatch repair protein MutS (855 aa).

Residue Gly616–Ser623 participates in ATP binding.

This sequence belongs to the DNA mismatch repair MutS family.

Its function is as follows. This protein is involved in the repair of mismatches in DNA. It is possible that it carries out the mismatch recognition step. This protein has a weak ATPase activity. The sequence is that of DNA mismatch repair protein MutS from Salmonella schwarzengrund (strain CVM19633).